Consider the following 255-residue polypeptide: MAVISMKQLLEAGVHFGHQTRRWNPKMAKYIFTERNGIHVIDLQQTVKMVDTAYEFVREAAANDAVILFVGTKKQAAEAVAEEATRAGQYYINHRWLGGTLTNWNTIKKRIARLKEIKQMEADGTFEVLPKKEVALLNKQRARLEKFLGGIEDMPRIPDVIYIVDPHKEQIAVKEAKKLGIPVVAMVDTNADPDEIDVIIPANDDAIRAVKLITSKMADAIIEGNQGEDASADFQEAAAADSIEEIVEVVEGDNN.

It belongs to the universal ribosomal protein uS2 family.

The sequence is that of Small ribosomal subunit protein uS2 from Streptococcus thermophilus (strain CNRZ 1066).